Consider the following 399-residue polypeptide: MAREKFERNKPHVNIGTIGHVDHGKTTLTAAITKVLAKKGQAEAQDYAEIDGAPEERERGITINTAHVEYETDGRHYAHVDCPGHADYVKNMITGAAQMDGAILVVAATDGAMAQTKEHILLAKQVGVPALVVALNKCDMVDDEEMIELVEMEIRELLTSYDFPGDDIPVVQVSGLKAIEGEADWETKIDDLMTAVDASIPEPEREIDKPFLMAVEDVFSITGRGTVATGRIERGKVTVGEEVEIVGIRDTRLTTVTGVEMFRKLLDEGMAGDNVGLLLRGIQKEDIERGMVLVKKGSITPHTKFEGEVYVLKKEEGGRHTPFFAGYRPQFYIRTTDVTGQITAFTSDDGSNVEMVMPGDRIKMTGELIAPVAIEQGMRFAIREGGRTIGAGVVSKIIE.

Positions 10 to 204 (KPHVNIGTIG…AVDASIPEPE (195 aa)) constitute a tr-type G domain. The interval 19-26 (GHVDHGKT) is G1. 19 to 26 (GHVDHGKT) serves as a coordination point for GTP. Threonine 26 lines the Mg(2+) pocket. The G2 stretch occupies residues 60-64 (GITIN). The G3 stretch occupies residues 81-84 (DCPG). Residues 81–85 (DCPGH) and 136–139 (NKCD) contribute to the GTP site. Residues 136-139 (NKCD) are G4. The segment at 174-176 (SGL) is G5.

Belongs to the TRAFAC class translation factor GTPase superfamily. Classic translation factor GTPase family. EF-Tu/EF-1A subfamily. In terms of assembly, monomer.

It localises to the cytoplasm. The enzyme catalyses GTP + H2O = GDP + phosphate + H(+). In terms of biological role, GTP hydrolase that promotes the GTP-dependent binding of aminoacyl-tRNA to the A-site of ribosomes during protein biosynthesis. In Prochlorococcus marinus (strain NATL1A), this protein is Elongation factor Tu.